Consider the following 773-residue polypeptide: Linolenate 9R-lipoxygenase (773 aa).

Positions Tyr-176–Ile-773 constitute a Lipoxygenase domain. Residues His-515, His-520, and Ile-773 each coordinate Fe cation.

The protein belongs to the lipoxygenase family.

It catalyses the reaction (9Z,12Z,15Z)-octadecatrienoate + O2 = (9R,10E,12Z,15Z)-9-hydroperoxyoctadeca-10,12,15-trienoate. It participates in lipid metabolism; oxylipin biosynthesis. In terms of biological role, catalyzes the conversion of alpha-linoleate to (9R,10E,12Z,15Z)-9-hydroperoxyoctadeca-10,12,15-trienoate in oxylipin biosynthesis. Also converts alpha-linoleate to (9R,10E,12Z)-9-hydroperoxyoctadeca-10,12-dienoate. The protein is Linolenate 9R-lipoxygenase of Nostoc sp. (strain PCC 7120 / SAG 25.82 / UTEX 2576).